A 305-amino-acid chain; its full sequence is MLRIAEEVTTALEEGRAVVALESTLISHGLPYPHNLAVAEGLEAEVRAAGAVPATIGLIEGVPVIGLNGNELERLAVGGDRVRKLSRRDIGAAIVDHADGATTVAATMALAAAAGIEVFATGGIGGVHRGATHSWDVSADLTELGRTPVLVVCAGAKAILDLPATLEYLETQGVPVVGYQTVEFPAFYTPHSGLTVAAVAADALAAARMWRIQRRYHTFAAPGGMLLCVPPPERHALEREAVEAAIGRALARAEAEGVRGPAVTPFLLAAMAEETSGESIETNIALLRNNTRVAAEVAVRISELG.

Glutamate 22 (proton donor) is an active-site residue. Substrate contacts are provided by lysine 84 and valine 104. Aspartate 136 is a binding site for Mn(2+). A substrate-binding site is contributed by 138–140 (SAD). Lysine 157 (nucleophile) is an active-site residue.

Belongs to the pseudouridine-5'-phosphate glycosidase family. As to quaternary structure, homotrimer. Requires Mn(2+) as cofactor.

It carries out the reaction D-ribose 5-phosphate + uracil = psi-UMP + H2O. Catalyzes the reversible cleavage of pseudouridine 5'-phosphate (PsiMP) to ribose 5-phosphate and uracil. Functions biologically in the cleavage direction, as part of a pseudouridine degradation pathway. The polypeptide is Pseudouridine-5'-phosphate glycosidase (Chloroflexus aurantiacus (strain ATCC 29364 / DSM 637 / Y-400-fl)).